A 188-amino-acid polypeptide reads, in one-letter code: Ribosome-recycling factor (188 aa).

Belongs to the RRF family.

Its subcellular location is the cytoplasm. Responsible for the release of ribosomes from messenger RNA at the termination of protein biosynthesis. May increase the efficiency of translation by recycling ribosomes from one round of translation to another. This chain is Ribosome-recycling factor, found in Gluconobacter oxydans (strain 621H) (Gluconobacter suboxydans).